Reading from the N-terminus, the 130-residue chain is Small ribosomal subunit protein uS9 (130 aa).

The protein belongs to the universal ribosomal protein uS9 family.

In Neisseria gonorrhoeae (strain ATCC 700825 / FA 1090), this protein is Small ribosomal subunit protein uS9.